The chain runs to 200 residues: Putative hydrolase MhqD (200 aa).

Catalysis depends on charge relay system residues Ser100, Asp150, and His181.

The protein belongs to the AB hydrolase superfamily. AB hydrolase 2 family.

The protein resides in the cytoplasm. Putative hydrolase that may contribute to the degradation of aromatic compounds. The protein is Putative hydrolase MhqD (mhqD) of Bacillus subtilis (strain 168).